Here is a 192-residue protein sequence, read N- to C-terminus: RNA pyrophosphohydrolase (192 aa).

Residues 6–149 (GYRPNVGIVI…KKDVYRKVMK (144 aa)) form the Nudix hydrolase domain. The Nudix box signature appears at 38–59 (GGINDNETAEQAMYRELYEEAG).

This sequence belongs to the Nudix hydrolase family. RppH subfamily. The cofactor is a divalent metal cation.

Accelerates the degradation of transcripts by removing pyrophosphate from the 5'-end of triphosphorylated RNA, leading to a more labile monophosphorylated state that can stimulate subsequent ribonuclease cleavage. The chain is RNA pyrophosphohydrolase from Histophilus somni (strain 129Pt) (Haemophilus somnus).